A 20-amino-acid polypeptide reads, in one-letter code: MIINHNMSAINAQXVQGBVT.

The protein belongs to the bacterial flagellin family. The flagellum consists of an outer layer composed of repeating units of FlaA around a core that contains one or all of five antigenically related polypeptides.

Its subcellular location is the periplasmic flagellum. It is found in the periplasm. Component of the core of the flagella. The chain is Flagellar filament 33 kDa core protein from Spirochaeta aurantia.